The chain runs to 263 residues: Microtubule-associated protein RP/EB family member 1 (263 aa).

Residues 14-116 form the Calponin-homology (CH) domain; the sequence is NLSRHDMLAW…FVQWFKKFFD (103 aa). In terms of domain architecture, EB1 C-terminal spans 180 to 250; the sequence is KKAAGDDESA…LYATDEGFVI (71 aa).

It belongs to the MAPRE family.

The protein localises to the cytoplasm. It localises to the cytoskeleton. Its subcellular location is the microtubule organizing center. It is found in the centrosome. The protein resides in the golgi apparatus. The protein localises to the spindle. It localises to the spindle pole. Functionally, plus-end tracking protein (+TIP) that binds to the plus-end of microtubules and regulates the dynamics of the microtubule cytoskeleton. Promotes cytoplasmic microtubule nucleation and elongation. Involved in mitotic spindle positioning by stabilizing microtubules and promoting dynamic connection between astral microtubules and the cortex during mitotic chromosome segregation. The chain is Microtubule-associated protein RP/EB family member 1 (MAPRE1) from Coturnix coturnix (Common quail).